A 103-amino-acid chain; its full sequence is Small ribosomal subunit protein uS10 (103 aa).

Belongs to the universal ribosomal protein uS10 family. As to quaternary structure, part of the 30S ribosomal subunit.

Functionally, involved in the binding of tRNA to the ribosomes. This chain is Small ribosomal subunit protein uS10, found in Acidovorax sp. (strain JS42).